The chain runs to 207 residues: MKLLVASNNAKKLGELQRILDQAGIENVELLALADVPSYPEPVEDGRTFTENALIKARAGASNTGLITLADDSGLEVDALNGMPGVLSARWAGKHGNDQANNDLLLAQIADIPEEHRGAAFVSVCAIVTPDGREFVEEGRWHGTLLREPVGTNGFGYDPLFVPMEESLIEGRDRSSAQLTAQEKDALSHRGKALRALVPAIAELAGQ.

7 to 12 serves as a coordination point for substrate; that stretch reads SNNAKK. Asp72 acts as the Proton acceptor in catalysis. Asp72 lines the Mg(2+) pocket. Substrate contacts are provided by residues Ser73, 155–158, Lys184, and 189–190; these read FGYD and HR.

This sequence belongs to the HAM1 NTPase family. Homodimer. The cofactor is Mg(2+).

It carries out the reaction XTP + H2O = XMP + diphosphate + H(+). The enzyme catalyses dITP + H2O = dIMP + diphosphate + H(+). It catalyses the reaction ITP + H2O = IMP + diphosphate + H(+). Functionally, pyrophosphatase that catalyzes the hydrolysis of nucleoside triphosphates to their monophosphate derivatives, with a high preference for the non-canonical purine nucleotides XTP (xanthosine triphosphate), dITP (deoxyinosine triphosphate) and ITP. Seems to function as a house-cleaning enzyme that removes non-canonical purine nucleotides from the nucleotide pool, thus preventing their incorporation into DNA/RNA and avoiding chromosomal lesions. The polypeptide is dITP/XTP pyrophosphatase (Corynebacterium efficiens (strain DSM 44549 / YS-314 / AJ 12310 / JCM 11189 / NBRC 100395)).